The primary structure comprises 63 residues: Conotoxin Pn-B01411 (63 aa).

The signal sequence occupies residues 1–22 (MRCFPVFIILLLLMASAPSFDA). A propeptide spanning residues 23–49 (RPKTEDDVPLSSFRDNLKRTLRTLLDP) is cleaved from the precursor. The residue at position 62 (I62) is an Isoleucine amide.

The protein belongs to the conotoxin T superfamily. Post-translationally, contains 2 disulfide bonds that can be either 'C1-C3, C2-C4' or 'C1-C4, C2-C3', since these disulfide connectivities have been observed for conotoxins with cysteine framework V (for examples, see AC P0DQQ7 and AC P81755). In terms of tissue distribution, expressed by the venom duct.

The protein resides in the secreted. The polypeptide is Conotoxin Pn-B01411 (Conus pennaceus (Feathered cone)).